The chain runs to 232 residues: Large ribosomal subunit protein uL1 (232 aa).

It belongs to the universal ribosomal protein uL1 family. Part of the 50S ribosomal subunit.

Binds directly to 23S rRNA. The L1 stalk is quite mobile in the ribosome, and is involved in E site tRNA release. Its function is as follows. Protein L1 is also a translational repressor protein, it controls the translation of the L11 operon by binding to its mRNA. The sequence is that of Large ribosomal subunit protein uL1 from Xylella fastidiosa (strain M12).